Here is a 315-residue protein sequence, read N- to C-terminus: tRNA pseudouridine synthase B (315 aa).

Residue D54 is the Nucleophile of the active site.

This sequence belongs to the pseudouridine synthase TruB family. Type 1 subfamily.

The catalysed reaction is uridine(55) in tRNA = pseudouridine(55) in tRNA. In terms of biological role, responsible for synthesis of pseudouridine from uracil-55 in the psi GC loop of transfer RNAs. This chain is tRNA pseudouridine synthase B, found in Cupriavidus taiwanensis (strain DSM 17343 / BCRC 17206 / CCUG 44338 / CIP 107171 / LMG 19424 / R1) (Ralstonia taiwanensis (strain LMG 19424)).